The chain runs to 251 residues: Gamma-glutamyl peptidase 4 (251 aa).

The Glutamine amidotransferase type-1 domain maps to 16–213 (SEFAKKTYGG…IDRVLAGGHI (198 aa)). Cys-100 functions as the Nucleophile in the catalytic mechanism. Catalysis depends on residues His-192 and Glu-194.

The protein belongs to the peptidase C26 family.

The protein localises to the cytoplasm. The protein resides in the cytosol. It participates in secondary metabolite biosynthesis. Involved in glucosinolate biosynthesis. Hydrolyzes the gamma-glutamyl peptide bond of several glutathione (GSH) conjugates to produce Cys-Gly conjugates related to glucosinolates. The gamma-Glu-Cys-Gly-GSH conjugates are the sulfur-donating molecule in glucosinolate biosynthesis. In Arabidopsis thaliana (Mouse-ear cress), this protein is Gamma-glutamyl peptidase 4.